The following is a 122-amino-acid chain: Anti-sigma-F factor antagonist RsfB (122 aa).

Residues 7-115 (ITVTVADHNG…STLHDALTGV (109 aa)) form the STAS domain. Serine 61 carries the phosphoserine modification.

Belongs to the anti-sigma-factor antagonist family. As to quaternary structure, interacts with anti-sigma-F factor RsbW (UsfX). Its phosphorylation may prevent this interaction. In terms of processing, putative phosphorylation on Ser-61 may prevent interaction with RsbW.

Functionally, positive regulator of sigma-F (SigF) activity. Binds to anti-sigma-F factor RsbW (UsfX) preventing its binding to SigF, thus activating transcription. This is Anti-sigma-F factor antagonist RsfB (rsfB) from Mycobacterium tuberculosis (strain CDC 1551 / Oshkosh).